The chain runs to 347 residues: Putative adhesin P1-like protein MPN_099 (347 aa).

The segment covering phenylalanine 282–proline 300 has biased composition (polar residues). The disordered stretch occupies residues phenylalanine 282–phenylalanine 302.

Belongs to the adhesin P1 family.

In Mycoplasma pneumoniae (strain ATCC 29342 / M129 / Subtype 1) (Mycoplasmoides pneumoniae), this protein is Putative adhesin P1-like protein MPN_099.